Here is a 306-residue protein sequence, read N- to C-terminus: Homoserine kinase (306 aa).

95–105 (PHSRGLGSSAA) contacts ATP.

It belongs to the GHMP kinase family. Homoserine kinase subfamily.

The protein localises to the cytoplasm. It catalyses the reaction L-homoserine + ATP = O-phospho-L-homoserine + ADP + H(+). Its pathway is amino-acid biosynthesis; L-threonine biosynthesis; L-threonine from L-aspartate: step 4/5. In terms of biological role, catalyzes the ATP-dependent phosphorylation of L-homoserine to L-homoserine phosphate. The sequence is that of Homoserine kinase from Mycobacteroides abscessus (strain ATCC 19977 / DSM 44196 / CCUG 20993 / CIP 104536 / JCM 13569 / NCTC 13031 / TMC 1543 / L948) (Mycobacterium abscessus).